The sequence spans 90 residues: Large ribosomal subunit protein eL37 (90 aa).

Residues Cys-19, Cys-22, Cys-34, and Cys-37 each contribute to the Zn(2+) site. The C4-type zinc finger occupies 19–37 (CRRCGRQSYHKQKNSCSSC). Positions 21-31 (RCGRQSYHKQK) are enriched in basic residues. The interval 21-59 (RCGRQSYHKQKNSCSSCGYPNPKMRNPGSIKARRRRTIG) is disordered.

It belongs to the eukaryotic ribosomal protein eL37 family. Zn(2+) is required as a cofactor.

Its function is as follows. Binds to the 23S rRNA. This Encephalitozoon cuniculi (strain GB-M1) (Microsporidian parasite) protein is Large ribosomal subunit protein eL37 (RPL37).